Reading from the N-terminus, the 399-residue chain is Elongation factor Tu (399 aa).

In terms of domain architecture, tr-type G spans 10 to 209; sequence KPHVNIGTIG…AVDEYIPEPT (200 aa). The G1 stretch occupies residues 19–26; that stretch reads GHVDHGKT. 19 to 26 is a GTP binding site; the sequence is GHVDHGKT. Mg(2+) is bound at residue T26. Residues 60–64 are G2; that stretch reads GITIA. The tract at residues 81–84 is G3; it reads DCPG. GTP contacts are provided by residues 81–85 and 136–139; these read DCPGH and NKED. Residues 136–139 are G4; the sequence is NKED. Residues 174–176 are G5; that stretch reads SAK.

It belongs to the TRAFAC class translation factor GTPase superfamily. Classic translation factor GTPase family. EF-Tu/EF-1A subfamily. As to quaternary structure, monomer.

Its subcellular location is the cytoplasm. The catalysed reaction is GTP + H2O = GDP + phosphate + H(+). In terms of biological role, GTP hydrolase that promotes the GTP-dependent binding of aminoacyl-tRNA to the A-site of ribosomes during protein biosynthesis. The polypeptide is Elongation factor Tu (Sulfurimonas denitrificans (strain ATCC 33889 / DSM 1251) (Thiomicrospira denitrificans (strain ATCC 33889 / DSM 1251))).